The primary structure comprises 267 residues: Large ribosomal subunit protein uL3 (267 aa).

The interval 124 to 147 (NQHIGPKSHGGGGGSQPVRQTGSL) is disordered.

The protein belongs to the universal ribosomal protein uL3 family. Part of the 50S ribosomal subunit. Forms a cluster with proteins L14 and L19.

Functionally, one of the primary rRNA binding proteins, it binds directly near the 3'-end of the 23S rRNA, where it nucleates assembly of the 50S subunit. The polypeptide is Large ribosomal subunit protein uL3 (Mycoplasmopsis agalactiae (strain NCTC 10123 / CIP 59.7 / PG2) (Mycoplasma agalactiae)).